An 804-amino-acid polypeptide reads, in one-letter code: Probable copper-exporting P-type ATPase (804 aa).

Topologically, residues 1 to 101 (MVKDTYISSA…VEHLSRMKRK (101 aa)) are cytoplasmic. An HMA 1 domain is found at 16–82 (MERTVRVTGM…VIEDLGYGVV (67 aa)). Cu(+) contacts are provided by Cys27 and Cys30. Residues 102 to 122 (LYVAAFAGVLLLFLAHFISLP) form a helical membrane-spanning segment. Residues 123–128 (YEDFVQ) are Extracellular-facing. A helical membrane pass occupies residues 129–149 (LLIALPAIFYSGSSIFKAAFS). Topologically, residues 150 to 159 (ALRRRTLNMD) are cytoplasmic. A helical transmembrane segment spans residues 160–180 (VMYSMGVGAAFLASVLSTAGV). At 181–186 (LPREYS) the chain is on the extracellular side. Residues 187–204 (FYETSVLLLAFLLLGRTL) traverse the membrane as a helical segment. Residues 205–339 (EARAKSRTGE…PIQRLADKVV (135 aa)) lie on the Cytoplasmic side of the membrane. The helical transmembrane segment at 340 to 360 (AYFIPTVLLVAISAFIYWYFI) threads the bilayer. The Extracellular segment spans residues 361–364 (AHAP). A helical transmembrane segment spans residues 365–385 (LLFAFTTLIAVLVVACPCAFG). The Cytoplasmic portion of the chain corresponds to 386–680 (LATPTALTVG…KIKQNIFWAL (295 aa)). Asp424 functions as the 4-aspartylphosphate intermediate in the catalytic mechanism. Residues 457 to 462 (ERRSEH) and 490 to 501 (GEGVVADGILVG) contribute to the ATP site. Mg(2+)-binding residues include Asp618 and Asp622. Residues 681 to 701 (IYNVILIPAAAGLLYPIFGVV) form a helical membrane-spanning segment. At 702-704 (FRP) the chain is on the extracellular side. Residues 705 to 725 (EFAGLAMAMSSVSVVANSLLL) traverse the membrane as a helical segment. Residues 726 to 804 (RNYVPPIRRG…AAGYQAKLRS (79 aa)) lie on the Cytoplasmic side of the membrane. Residues 740-801 (EKIVLELSGL…AVEAAGYQAK (62 aa)) enclose the HMA 2 domain. The Cu(+) site is built by Cys751 and Cys754.

This sequence belongs to the cation transport ATPase (P-type) (TC 3.A.3) family. Type IB subfamily. In terms of assembly, interacts with CopZ probably in the CopZ Cu(+)-bound form.

Its subcellular location is the cell membrane. It catalyses the reaction Cu(+)(in) + ATP + H2O = Cu(+)(out) + ADP + phosphate + H(+). With respect to regulation, activated by Cu(+) and Ag(+) and inhibited by vanadate. Activated by CopZ in its Cu(+)-bound form. In terms of biological role, probably involved in copper and silver export. The sequence is that of Probable copper-exporting P-type ATPase (copA) from Archaeoglobus fulgidus (strain ATCC 49558 / DSM 4304 / JCM 9628 / NBRC 100126 / VC-16).